A 373-amino-acid chain; its full sequence is D-alanine--D-alanine ligase (373 aa).

In terms of domain architecture, ATP-grasp spans 156–363; sequence KKLLAAEGLP…YPTLLAAMVD (208 aa). Position 184–239 (184–239) interacts with ATP; the sequence is RERLGLPVFVKPARGGSSIGVSRVTAWDELPAAVALARRHDPKVIVEAAVIGRELE. Residues Asp318, Glu330, and Asn332 each contribute to the Mg(2+) site.

It belongs to the D-alanine--D-alanine ligase family. The cofactor is Mg(2+). It depends on Mn(2+) as a cofactor.

Its subcellular location is the cytoplasm. The catalysed reaction is 2 D-alanine + ATP = D-alanyl-D-alanine + ADP + phosphate + H(+). It participates in cell wall biogenesis; peptidoglycan biosynthesis. Its function is as follows. Cell wall formation. The sequence is that of D-alanine--D-alanine ligase from Mycolicibacterium smegmatis (strain ATCC 700084 / mc(2)155) (Mycobacterium smegmatis).